We begin with the raw amino-acid sequence, 285 residues long: Probable endonuclease 4 (285 aa).

Positions 69, 109, 145, 179, 182, 216, 229, 231, and 261 each coordinate Zn(2+).

It belongs to the AP endonuclease 2 family. Zn(2+) serves as cofactor.

It carries out the reaction Endonucleolytic cleavage to 5'-phosphooligonucleotide end-products.. Its function is as follows. Endonuclease IV plays a role in DNA repair. It cleaves phosphodiester bonds at apurinic or apyrimidinic (AP) sites, generating a 3'-hydroxyl group and a 5'-terminal sugar phosphate. This is Probable endonuclease 4 from Salmonella typhi.